The chain runs to 597 residues: DNA mismatch repair protein MutL (597 aa).

It belongs to the DNA mismatch repair MutL/HexB family.

Its function is as follows. This protein is involved in the repair of mismatches in DNA. It is required for dam-dependent methyl-directed DNA mismatch repair. May act as a 'molecular matchmaker', a protein that promotes the formation of a stable complex between two or more DNA-binding proteins in an ATP-dependent manner without itself being part of a final effector complex. This Rhodopseudomonas palustris (strain BisB5) protein is DNA mismatch repair protein MutL.